Here is a 440-residue protein sequence, read N- to C-terminus: R3H and coiled-coil domain-containing protein 1 (440 aa).

Residues 16–81 (NDFVHRIQEE…KRRTVICHQD (66 aa)) form the R3H domain. The interval 154-225 (TSVLKREAPA…LGPESQSGKG (72 aa)) is disordered. Residues 157-168 (LKREAPAGRDPE) show a composition bias toward basic and acidic residues. Serine 236 is modified (phosphoserine). The stretch at 242-300 (LEKGKESLLEKRLVAEEEEDEEEVEEDGPSSCSEDDYSELLQEITDNLTKKEIQIEKIH) forms a coiled coil. The segment at 254-276 (LVAEEEEDEEEVEEDGPSSCSED) is disordered. Positions 257-276 (EEEEDEEEVEEDGPSSCSED) are enriched in acidic residues.

The chain is R3H and coiled-coil domain-containing protein 1 from Homo sapiens (Human).